Consider the following 382-residue polypeptide: uncharacterized protein (382 aa).

This is an uncharacterized protein from Bacillus subtilis (strain 168).